A 156-amino-acid chain; its full sequence is Inner membrane protein YlaC (156 aa).

The Cytoplasmic segment spans residues 1-35 (MTEIQRLLTETIESLNTREKRDNKPRFSISFIRKH). Residues 36–56 (PGLFIGMYVAFFATLAVMLQS) form a helical membrane-spanning segment. At 57–58 (ET) the chain is on the periplasmic side. Residues 59 to 79 (LSGSVWLLVVLFILLNGFFFF) traverse the membrane as a helical segment. Over 80–156 (DVYPRYRYED…FTLARAESTS (77 aa)) the chain is Cytoplasmic.

Its subcellular location is the cell inner membrane. This is Inner membrane protein YlaC (ylaC) from Escherichia coli (strain K12).